A 436-amino-acid polypeptide reads, in one-letter code: MSLPTVAIVGRPNVGKSTIFNRIAGERISIVEDIPGVTRDRIYATGEWLTRKFNIIDTGGIELSDEPFMTEIRAQAEIAMTEADVIIAVVDGETGITDADEAVANILYRTDKPVILIVNKVDNPERRMEIFDFYSLGLGDPYPVSAVHGIGTGDVLDAIVQNLPNEIEEENEDVIKFSLIGRPNVGKSSLINAILGEDRVIASPIAGTTRDAIDTHFVDSEDQEFVMIDTAGMRKSGKIYENTEKYSVMRAMRAIDRSDIVLMVINAEEGIREYDMRIAGFAHEAGKGILIVVNKWDTLEKDNDTMKKFELEIRTKFKFLDYAPIVYVSAKTGQRLNKLPDMIKEIHHAQNLRISSSVLNDVIMDAVAINPTPTDKGKRLKIFYATQVAIKPPTFVVFVNEEELMHFSYLRFLENQIRKAFVFEGTPIHLIARKRK.

EngA-type G domains lie at 4-167 (PTVA…PNEI) and 175-351 (IKFS…HAQN). GTP-binding positions include 10–17 (GRPNVGKS), 57–61 (DTGGI), 119–122 (NKVD), 181–188 (GRPNVGKS), 229–233 (DTAGM), and 294–297 (NKWD). The 85-residue stretch at 352–436 (LRISSSVLND…PIHLIARKRK (85 aa)) folds into the KH-like domain.

It belongs to the TRAFAC class TrmE-Era-EngA-EngB-Septin-like GTPase superfamily. EngA (Der) GTPase family. In terms of assembly, associates with the 50S ribosomal subunit.

Functionally, GTPase that plays an essential role in the late steps of ribosome biogenesis. This is GTPase Der from Lactococcus lactis subsp. cremoris (strain SK11).